A 181-amino-acid chain; its full sequence is Adenine phosphoribosyltransferase (181 aa).

This sequence belongs to the purine/pyrimidine phosphoribosyltransferase family. In terms of assembly, homodimer.

It is found in the cytoplasm. The catalysed reaction is AMP + diphosphate = 5-phospho-alpha-D-ribose 1-diphosphate + adenine. Its pathway is purine metabolism; AMP biosynthesis via salvage pathway; AMP from adenine: step 1/1. Its function is as follows. Catalyzes a salvage reaction resulting in the formation of AMP, that is energically less costly than de novo synthesis. This chain is Adenine phosphoribosyltransferase, found in Methylobacterium sp. (strain 4-46).